The primary structure comprises 303 residues: Glycine--tRNA ligase alpha subunit (303 aa).

This sequence belongs to the class-II aminoacyl-tRNA synthetase family. Tetramer of two alpha and two beta subunits.

Its subcellular location is the cytoplasm. It catalyses the reaction tRNA(Gly) + glycine + ATP = glycyl-tRNA(Gly) + AMP + diphosphate. The chain is Glycine--tRNA ligase alpha subunit from Enterobacter sp. (strain 638).